Here is a 334-residue protein sequence, read N- to C-terminus: Glyceraldehyde-3-phosphate dehydrogenase (334 aa).

NAD(+) is bound by residues 12-13, aspartate 37, arginine 81, and serine 123; that span reads RI. Residues 153-155 and threonine 184 each bind D-glyceraldehyde 3-phosphate; that span reads SCT. Catalysis depends on cysteine 154, which acts as the Nucleophile. Asparagine 185 serves as a coordination point for NAD(+). D-glyceraldehyde 3-phosphate-binding positions include arginine 199, 212–213, and arginine 235; that span reads TG. Position 314 (asparagine 314) interacts with NAD(+).

This sequence belongs to the glyceraldehyde-3-phosphate dehydrogenase family. As to quaternary structure, homotetramer.

The protein resides in the cytoplasm. It catalyses the reaction D-glyceraldehyde 3-phosphate + phosphate + NAD(+) = (2R)-3-phospho-glyceroyl phosphate + NADH + H(+). The protein operates within carbohydrate degradation; glycolysis; pyruvate from D-glyceraldehyde 3-phosphate: step 1/5. In terms of biological role, catalyzes the oxidative phosphorylation of glyceraldehyde 3-phosphate (G3P) to 1,3-bisphosphoglycerate (BPG) using the cofactor NAD. The first reaction step involves the formation of a hemiacetal intermediate between G3P and a cysteine residue, and this hemiacetal intermediate is then oxidized to a thioester, with concomitant reduction of NAD to NADH. The reduced NADH is then exchanged with the second NAD, and the thioester is attacked by a nucleophilic inorganic phosphate to produce BPG. The polypeptide is Glyceraldehyde-3-phosphate dehydrogenase (gap) (Pseudomonas aeruginosa (strain ATCC 15692 / DSM 22644 / CIP 104116 / JCM 14847 / LMG 12228 / 1C / PRS 101 / PAO1)).